The chain runs to 311 residues: Methionyl-tRNA formyltransferase (311 aa).

112 to 115 (SLLP) is a binding site for (6S)-5,6,7,8-tetrahydrofolate.

Belongs to the Fmt family.

It catalyses the reaction L-methionyl-tRNA(fMet) + (6R)-10-formyltetrahydrofolate = N-formyl-L-methionyl-tRNA(fMet) + (6S)-5,6,7,8-tetrahydrofolate + H(+). Its function is as follows. Attaches a formyl group to the free amino group of methionyl-tRNA(fMet). The formyl group appears to play a dual role in the initiator identity of N-formylmethionyl-tRNA by promoting its recognition by IF2 and preventing the misappropriation of this tRNA by the elongation apparatus. In Geobacter metallireducens (strain ATCC 53774 / DSM 7210 / GS-15), this protein is Methionyl-tRNA formyltransferase.